The chain runs to 587 residues: V-type proton ATPase catalytic subunit A (587 aa).

243–250 (GAFGCGKT) contributes to the ATP binding site.

It belongs to the ATPase alpha/beta chains family. In terms of assembly, V-ATPase is a heteromultimeric enzyme composed of a peripheral catalytic V1 complex (main components: subunits A, B, C, D, E, and F) attached to an integral membrane V0 proton pore complex (main component: the proteolipid protein).

It carries out the reaction ATP + H2O + 4 H(+)(in) = ADP + phosphate + 5 H(+)(out). In terms of biological role, catalytic subunit of the peripheral V1 complex of vacuolar ATPase. V-ATPase vacuolar ATPase is responsible for acidifying a variety of intracellular compartments in eukaryotic cells. This chain is V-type proton ATPase catalytic subunit A, found in Cyanidium caldarium (Red alga).